Here is a 341-residue protein sequence, read N- to C-terminus: tRNA N6-adenosine threonylcarbamoyltransferase (341 aa).

Fe cation-binding residues include histidine 111 and histidine 115. Substrate contacts are provided by residues 134 to 138 (LVSGG), aspartate 167, glycine 180, and asparagine 276. Aspartate 304 provides a ligand contact to Fe cation.

Belongs to the KAE1 / TsaD family. Requires Fe(2+) as cofactor.

The protein resides in the cytoplasm. The enzyme catalyses L-threonylcarbamoyladenylate + adenosine(37) in tRNA = N(6)-L-threonylcarbamoyladenosine(37) in tRNA + AMP + H(+). Functionally, required for the formation of a threonylcarbamoyl group on adenosine at position 37 (t(6)A37) in tRNAs that read codons beginning with adenine. Is involved in the transfer of the threonylcarbamoyl moiety of threonylcarbamoyl-AMP (TC-AMP) to the N6 group of A37, together with TsaE and TsaB. TsaD likely plays a direct catalytic role in this reaction. The sequence is that of tRNA N6-adenosine threonylcarbamoyltransferase from Pseudomonas aeruginosa (strain UCBPP-PA14).